The following is a 266-amino-acid chain: MSSVFGKPRAGSGPHSVPLEVNLAILGRRGAGKSALTVKFLTKRFISEYDPNLEDTYSSEETVDHQPVHLRVMDTADLDTPRNCERYLNWAHAFLVVYSVDSRASFEGSSSYLELLALHAKETQRGYPALLLGNKLDMAQYRQVTKAEGAALAGRFGCLFFEVSACLDFEHVQHVFHEAVREVRRELDKSPLARPLFISEEKTLSHQTPLTARHGLASCTFNTLSTASLKEMPTVAQAKLVTVKSSRAQSKRKAPTLTLLKGFKIF.

GTP contacts are provided by residues 27–34, 74–78, and 134–137; these read GRRGAGKS, DTADL, and NKLD.

It belongs to the small GTPase superfamily. Ras family.

The enzyme catalyses GTP + H2O = GDP + phosphate + H(+). This chain is Ras-like protein family member 12 (Rasl12), found in Mus musculus (Mouse).